The chain runs to 488 residues: UL37 immediate early glycoprotein (488 aa).

The signal sequence occupies residues 1–22 (MSPVYVNLLGSVGLLAFWYFSY). Positions 83–107 (GEESVTEDTEREDTEEEREDEEEEN) are enriched in acidic residues. A disordered region spans residues 83–119 (GEESVTEDTEREDTEEEREDEEEENEARTPEVNPMDA). 15 N-linked (GlcNAc...) asparagine; by host glycosylation sites follow: asparagine 206, asparagine 210, asparagine 219, asparagine 223, asparagine 242, asparagine 275, asparagine 281, asparagine 294, asparagine 297, asparagine 306, asparagine 333, asparagine 337, asparagine 343, asparagine 384, and asparagine 391. Residues 439–459 (ICTVAAGSIALLSLFCILLIG) traverse the membrane as a helical segment.

The protein belongs to the immediate early glycoprotein family. In terms of assembly, interacts with host BAX. Interacts with host RSAD2/viperin; this interaction results in RSAD2/viperin relocalization from the endoplasmic reticulum to the mitochondria, actin cytoskeleton disruption and enhancement of infection. Interacts with host PEX19; this interaction inhibits the peroxisomal-dependent antiviral signaling. Interacts with host CHCHD6; this interaction rewires mitochondria by engaging the conserved MICOS complex.

It is found in the host membrane. The protein resides in the host endoplasmic reticulum membrane. It localises to the host Golgi apparatus membrane. Its subcellular location is the host mitochondrion membrane. The protein localises to the host peroxisome. Multifunctional transmembrane protein that plays several key roles in viral replication. Rapidely traffics from the host endoplasmic reticulum to the outer mitochondrial membrane where it acts to inhibit host immune response, block apoptotic signaling, regulate calcium flux, and induce mitochondrial fragmentation. Sequesters proapoptotic BAX at the outer mitochondrial membrane and prevents cytochrome c release and subsequent initiation of the proapoptotic cascade. Also provoques a calcium efflux from host endoplasmic reticulum and F-actin cytoskeleton disruption. Participates in the increase of host mitochondrial biogenesis, thus promoting viral replication by efficient use of newly made mitochondria. Additionally, a subset of vMIA localizes to peroxisomes, causing fragmentation and blocking peroxisomal MAVS signaling. Mechanistically, inhibits host MAVS oligomerization at peroxisomes in a mitochondrial fission factors (MFF)-dependent manner and in mitochondria independently of mitochondrial fission factors. Plays an essential role in the trafficking of host viperin/RSAD2 from the endoplasmic reticulum to the viral assembly compartment via the mitochondria during viral infection as failure of viperin to localize to the mitochondria results in insufficient lipogenesis and thus reduces viral replication. Its function is as follows. May play a role in escape from the host antiviral response. The polypeptide is UL37 immediate early glycoprotein (UL37) (Homo sapiens (Human)).